A 140-amino-acid polypeptide reads, in one-letter code: ATP synthase epsilon chain (140 aa).

Belongs to the ATPase epsilon chain family. In terms of assembly, F-type ATPases have 2 components, CF(1) - the catalytic core - and CF(0) - the membrane proton channel. CF(1) has five subunits: alpha(3), beta(3), gamma(1), delta(1), epsilon(1). CF(0) has three main subunits: a, b and c.

The protein resides in the cell membrane. Functionally, produces ATP from ADP in the presence of a proton gradient across the membrane. This is ATP synthase epsilon chain from Dehalococcoides mccartyi (strain ATCC BAA-2100 / JCM 16839 / KCTC 5957 / BAV1).